The primary structure comprises 239 residues: Zwei Ig domain protein zig-7 (239 aa).

Residues 1–21 (MKLINCISIALLCTLVDFSSA) form the signal peptide. Asn43 carries N-linked (GlcNAc...) asparagine glycosylation. One can recognise an Ig-like C2-type domain in the interval 145–211 (PHVIGAERRG…TEDHIGKYRC (67 aa)). Cys164 and Cys211 form a disulfide bridge.

In terms of tissue distribution, expressed in body wall muscles.

The protein localises to the secreted. Functionally, probably not involved in maintaining the position of ASI and ASH head neuron cell bodies and ventral nerve cord axons of PVQ, PVP, RMEV, AVK and HSN neurons. This chain is Zwei Ig domain protein zig-7, found in Caenorhabditis elegans.